The sequence spans 115 residues: Large ribosomal subunit protein bL19 (115 aa).

Belongs to the bacterial ribosomal protein bL19 family.

This protein is located at the 30S-50S ribosomal subunit interface and may play a role in the structure and function of the aminoacyl-tRNA binding site. This Streptococcus pyogenes serotype M1 protein is Large ribosomal subunit protein bL19.